A 161-amino-acid chain; its full sequence is Protein-export protein SecB (161 aa).

Belongs to the SecB family. Homotetramer, a dimer of dimers. One homotetramer interacts with 1 SecA dimer.

It is found in the cytoplasm. Functionally, one of the proteins required for the normal export of preproteins out of the cell cytoplasm. It is a molecular chaperone that binds to a subset of precursor proteins, maintaining them in a translocation-competent state. It also specifically binds to its receptor SecA. The chain is Protein-export protein SecB from Shewanella pealeana (strain ATCC 700345 / ANG-SQ1).